The chain runs to 208 residues: Adenylyl-sulfate kinase 3 (208 aa).

37-45 (GLSGSGKST) provides a ligand contact to ATP. Substrate contacts are provided by residues aspartate 67, arginine 70, arginine 84, asparagine 87, 110–111 (IS), and glycine 160. Serine 111 serves as the catalytic Phosphoserine intermediate.

The protein belongs to the APS kinase family. As to expression, expressed in root vasculature, root tips, leaf epidermal and guard cells, pollen grains and radicle of immature seeds.

The protein resides in the cytoplasm. Its subcellular location is the cytosol. It carries out the reaction adenosine 5'-phosphosulfate + ATP = 3'-phosphoadenylyl sulfate + ADP + H(+). It functions in the pathway sulfur metabolism; hydrogen sulfide biosynthesis; sulfite from sulfate: step 2/3. Its function is as follows. Catalyzes the synthesis of activated sulfate for the sulfation of secondary metabolites, including the glucosinolates. Essential for plant reproduction and viability. This Arabidopsis thaliana (Mouse-ear cress) protein is Adenylyl-sulfate kinase 3.